The following is a 198-amino-acid chain: uncharacterized protein (198 aa).

It is found in the cytoplasm. This is an uncharacterized protein from Saccharomyces cerevisiae (strain ATCC 204508 / S288c) (Baker's yeast).